A 1278-amino-acid polypeptide reads, in one-letter code: NPC intracellular cholesterol transporter 1 (1278 aa).

A signal peptide spans 1 to 22 (MTARGLALGLLLLLLCPAQVFS). Over 23–261 (QSCVWYGECG…QPPPPPAPWT (239 aa)) the chain is Lumenal. Cystine bridges form between Cys25-Cys74, Cys31-Cys42, Cys63-Cys109, Cys75-Cys113, Cys97-Cys238, Cys100-Cys160, Cys177-Cys184, Cys227-Cys243, and Cys240-Cys247. Asn41 is a cholesterol binding site. Asn70 carries an N-linked (GlcNAc...) asparagine glycan. A cholesterol-binding site is contributed by Gln79. N-linked (GlcNAc...) asparagine glycosylation is found at Asn122 and Asn135. The N-linked (GlcNAc...) asparagine; atypical glycan is linked to Asn158. An important for cholesterol binding and cholesterol transfer from NPC1 to liposomes region spans residues 175-205 (LLCGKDADACNATNWIEYMFNKDNGQAPFTI). 2 N-linked (GlcNAc...) asparagine glycosylation sites follow: Asn185 and Asn222. The helical transmembrane segment at 262-282 (ILGLDAMYVIMWITYMAFLLV) threads the bilayer. Residues 283–350 (FFGAFFAVWC…RWGSFCVRNP (68 aa)) lie on the Cytoplasmic side of the membrane. A helical membrane pass occupies residues 351-371 (GCVIFFSLVFITACSSGLVFV). The Lumenal segment spans residues 372-620 (RVTTNPVDLW…DELNRESDSD (249 aa)). N-linked (GlcNAc...) asparagine glycosylation is found at Asn452, Asn459, Asn478, Asn524, Asn557, Asn572, and Asn598. 2 disulfides stabilise this stretch: Cys468–Cys479 and Cys516–Cys533. The 166-residue stretch at 620–785 (DVFTVVISYA…ITCFVSLLGL (166 aa)) folds into the SSD domain. A helical transmembrane segment spans residues 621 to 641 (VFTVVISYAIMFLYISLALGH). Residues 642-653 (MKSCRRLLVDSK) are Cytoplasmic-facing. The chain crosses the membrane as a helical span at residues 654 to 675 (VSLGIAGILIVLSSVACSLGVF). Residues 676–685 (SYIGLPLTLI) are Lumenal-facing. The helical transmembrane segment at 686–706 (VIEVIPFLVLAVGVDNIFILV) threads the bilayer. Topologically, residues 707-730 (QAYQRDERLQGETLDQQLGRVLGE) are cytoplasmic. The chain crosses the membrane as a helical span at residues 731-751 (VAPSMFLSSFSETVAFFLGAL). The Lumenal segment spans residues 752 to 759 (SVMPAVHT). The helical transmembrane segment at 760-783 (FSLFAGLAVFIDFLLQITCFVSLL) threads the bilayer. The Cytoplasmic portion of the chain corresponds to 784–832 (GLDIKRQEKNRLDIFCCVRGAEDGTSVQASESCLFRFFKNSYSPLLLKD). The chain crosses the membrane as a helical span at residues 833–853 (WMRPIVIAIFVGVLSFSIAVL). The Lumenal portion of the chain corresponds to 854-1097 (NKVDIGLDQS…YEQYLTIIDD (244 aa)). Cys909 and Cys914 are joined by a disulfide. Asn916, Asn931, Asn961, Asn968, Asn1064, and Asn1072 each carry an N-linked (GlcNAc...) asparagine glycan. 3 disulfide bridges follow: Cys956–Cys1011, Cys957–Cys979, and Cys967–Cys976. Residues 1098 to 1118 (TIFNLGVSLGAIFLVTMVLLG) form a helical membrane-spanning segment. At 1119-1124 (CELWSA) the chain is on the cytoplasmic side. The helical transmembrane segment at 1125–1145 (VIMCATIAMVLVNMFGVMWLW) threads the bilayer. At 1146 to 1150 (GISLN) the chain is on the lumenal side. A helical transmembrane segment spans residues 1151 to 1171 (AVSLVNLVMSCGISVEFCSHI). Topologically, residues 1172–1194 (TRAFTVSMKGSRVERAEEALAHM) are cytoplasmic. Residues 1195 to 1215 (GSSVFSGITLTKFGGIVVLAF) traverse the membrane as a helical segment. The Lumenal portion of the chain corresponds to 1216-1223 (AKSQIFQI). Residues 1224-1244 (FYFRMYLAMVLLGATHGLIFL) form a helical membrane-spanning segment. Topologically, residues 1245-1278 (PVLLSYIGPSVNKAKSCATEERYKGTERERLLNF) are cytoplasmic. Positions 1275–1278 (LLNF) are required for location in lysosomes. Residues 1275-1278 (LLNF) carry the Di-leucine motif motif.

It belongs to the patched family. In terms of assembly, interacts (via the second lumenal domain) with NPC2. Interacts with TMEM97; the interaction may decrease NPC1 availability to the cell. Interacts with TIM1. Interacts with SLC38A9; this interaction inhibits cholesterol-mediated mTORC1 activation via its sterol transport activity. As to quaternary structure, (Microbial infection) Interacts with ebolavirus glycoprotein. In terms of processing, N-glycosylated.

The protein localises to the late endosome membrane. It is found in the lysosome membrane. It catalyses the reaction cholesterol(in) = cholesterol(out). Its function is as follows. Intracellular cholesterol transporter which acts in concert with NPC2 and plays an important role in the egress of cholesterol from the endosomal/lysosomal compartment. Unesterified cholesterol that has been released from LDLs in the lumen of the late endosomes/lysosomes is transferred by NPC2 to the cholesterol-binding pocket in the N-terminal domain of NPC1. Cholesterol binds to NPC1 with the hydroxyl group buried in the binding pocket. Binds oxysterol with higher affinity than cholesterol. May play a role in vesicular trafficking in glia, a process that may be crucial for maintaining the structural and functional integrity of nerve terminals. Inhibits cholesterol-mediated mTORC1 activation throught its interaction with SLC38A9. (Microbial infection) Acts as an endosomal entry receptor for ebolavirus. This chain is NPC intracellular cholesterol transporter 1, found in Homo sapiens (Human).